Reading from the N-terminus, the 257-residue chain is Imidazole glycerol phosphate synthase subunit HisF (257 aa).

Catalysis depends on residues aspartate 11 and aspartate 130.

The protein belongs to the HisA/HisF family. Heterodimer of HisH and HisF.

The protein localises to the cytoplasm. It carries out the reaction 5-[(5-phospho-1-deoxy-D-ribulos-1-ylimino)methylamino]-1-(5-phospho-beta-D-ribosyl)imidazole-4-carboxamide + L-glutamine = D-erythro-1-(imidazol-4-yl)glycerol 3-phosphate + 5-amino-1-(5-phospho-beta-D-ribosyl)imidazole-4-carboxamide + L-glutamate + H(+). Its pathway is amino-acid biosynthesis; L-histidine biosynthesis; L-histidine from 5-phospho-alpha-D-ribose 1-diphosphate: step 5/9. Functionally, IGPS catalyzes the conversion of PRFAR and glutamine to IGP, AICAR and glutamate. The HisF subunit catalyzes the cyclization activity that produces IGP and AICAR from PRFAR using the ammonia provided by the HisH subunit. The protein is Imidazole glycerol phosphate synthase subunit HisF of Actinobacillus pleuropneumoniae serotype 7 (strain AP76).